We begin with the raw amino-acid sequence, 560 residues long: Solute carrier family 22 member 6 (560 aa).

Residues 1–15 (MAFSDLLEQVGSTGR) are Cytoplasmic-facing. A helical transmembrane segment spans residues 16–36 (FQVLHVTLLSMPILMMASHNL). The Extracellular portion of the chain corresponds to 37–143 (LQNFVAAVPP…LVCDYRALKQ (107 aa)). The chain crosses the membrane as a helical span at residues 144–164 (MSQTTYMGGVLVGAIVFGGLS). The Cytoplasmic portion of the chain corresponds to 165-170 (DRFGRR). A helical membrane pass occupies residues 171 to 191 (VLLLISNLMMAIGGTCVAFST). At 192-201 (SFTMFCVFRV) the chain is on the extracellular side. Residues 202–222 (CCGMALSGLVLNSFSLIVEWI) traverse the membrane as a helical segment. The Cytoplasmic portion of the chain corresponds to 223–228 (PTRVRT). A helical membrane pass occupies residues 229 to 249 (VVGTGTGYCYTTGQLILAAVA). At 250–256 (YCIRDWR) the chain is on the extracellular side. Residues 257 to 277 (WLTLAVSLPFYVSFLYSWWFL) form a helical membrane-spanning segment. Residues 278-345 (ESARWLVLTK…DLLRTSTMRT (68 aa)) lie on the Cytoplasmic side of the membrane. Residues 346–366 (ITICLSAVWFSTSFAYYGLSM) traverse the membrane as a helical segment. The Extracellular portion of the chain corresponds to 367 to 374 (DLQKFGVS). Residues 375 to 395 (IYLIQIIFGAVDIPAKIIVTI) traverse the membrane as a helical segment. Topologically, residues 396–406 (CMSMLGRRPSQ) are cytoplasmic. The chain crosses the membrane as a helical span at residues 407–427 (CGALVLAGIMILINLLVPSDL). Residues 428-433 (QMLRTS) are Extracellular-facing. Residues 434–454 (LAVIGKGCLAASFNCCYLYAG) traverse the membrane as a helical segment. The Cytoplasmic segment spans residues 455–465 (ELYPTVIRQSG). The helical transmembrane segment at 466–486 (MGWVSMMARFGAMVAPMVLLL) threads the bilayer. Residues 487 to 491 (GDDYP) lie on the Extracellular side of the membrane. The helical transmembrane segment at 492–512 (WIPGFIYGGAPIVSGIFAFFL) threads the bilayer. Topologically, residues 513 to 560 (PETLSQPLPDTIQDIDDRGLARTNSKRLPEKLDLAMKDPSCVLLKESV) are cytoplasmic.

Belongs to the major facilitator (TC 2.A.1) superfamily. Organic cation transporter (TC 2.A.1.19) family. Post-translationally, glycosylated. Glycosylation is necessary for proper targeting of the transporter to the plasma membrane.

The protein localises to the cell membrane. Its subcellular location is the basolateral cell membrane. It is found in the basal cell membrane. Its function is as follows. Involved in the renal elimination of endogenous and exogenous organic anions. Functions as organic anion exchanger when the uptake of one molecule of organic anion is coupled with an efflux of one molecule of endogenous dicarboxylic acid (glutarate, ketoglutarate, etc). Mediates the sodium-independent uptake of p-aminohippurate (PAH), 2,3-dimercapto-1-propanesulfonic acid (DMPS), cidofovir, adefovir, 9-(2-phosphonylmethoxyethyl) guanine (PMEG), 9-(2-phosphonylmethoxyethyl) diaminopurine (PMEDAP), ochratoxin (OTA), acyclovir (ACV), 3'-azido-3-'deoxythymidine (AZT), cimetidine (CMD), 2,4-dichloro-phenoxyacetate (2,4-D), hippurate (HA), indoleacetate (IA), indoxyl sulfate (IS) and 3-carboxy-4-methyl-5-propyl-2-furanpropionate (CMPF) and edaravone sulfate. PAH uptake is inhibited by p-chloromercuribenzenesulphonate (PCMBS), diethyl pyrocarbonate (DEPC), indomethacin, sulindac, diclofenac, carprofen, okadaic acid, benzothiazolylcysteine (BTC), S-chlorotrifluoroethylcysteine (CTFC), cysteine S-conjugates S-dichlorovinylcysteine (DCVC), furosemide, steviol, phorbol 12-myristate 13-acetate (PMA), calcium ionophore A23187, benzylpenicillin, bumetamide, losartan, probenecid, phenol red, urate, glutarate and alpha-ketoglutarate. The polypeptide is Solute carrier family 22 member 6 (slc22a6) (Danio rerio (Zebrafish)).